The sequence spans 205 residues: Outer-membrane lipoprotein carrier protein (205 aa).

A signal peptide spans 1–21 (MKKIVLLVTLVFSINYSFANA).

This sequence belongs to the LolA family. In terms of assembly, monomer.

It is found in the periplasm. In terms of biological role, participates in the translocation of lipoproteins from the inner membrane to the outer membrane. Only forms a complex with a lipoprotein if the residue after the N-terminal Cys is not an aspartate (The Asp acts as a targeting signal to indicate that the lipoprotein should stay in the inner membrane). This Francisella philomiragia subsp. philomiragia (strain ATCC 25017 / CCUG 19701 / FSC 153 / O#319-036) protein is Outer-membrane lipoprotein carrier protein.